The following is a 332-amino-acid chain: Biotin synthase (332 aa).

One can recognise a Radical SAM core domain in the interval 53–283 (WGKGGIHACS…VHPHSIIKFA (231 aa)). Positions 71, 75, and 78 each coordinate [4Fe-4S] cluster. Cysteine 150, cysteine 211, and lysine 281 together coordinate [2Fe-2S] cluster.

The protein belongs to the radical SAM superfamily. Biotin synthase family. As to quaternary structure, homodimer. It depends on [4Fe-4S] cluster as a cofactor. The cofactor is [2Fe-2S] cluster.

It carries out the reaction (4R,5S)-dethiobiotin + (sulfur carrier)-SH + 2 reduced [2Fe-2S]-[ferredoxin] + 2 S-adenosyl-L-methionine = (sulfur carrier)-H + biotin + 2 5'-deoxyadenosine + 2 L-methionine + 2 oxidized [2Fe-2S]-[ferredoxin]. Its pathway is cofactor biosynthesis; biotin biosynthesis; biotin from 7,8-diaminononanoate: step 2/2. Catalyzes the conversion of dethiobiotin (DTB) to biotin by the insertion of a sulfur atom into dethiobiotin via a radical-based mechanism. This is Biotin synthase from Chlorobium phaeovibrioides (strain DSM 265 / 1930) (Prosthecochloris vibrioformis (strain DSM 265)).